Reading from the N-terminus, the 393-residue chain is S-adenosylmethionine synthase 1 (393 aa).

Glutamate 9 is a Mg(2+) binding site. Histidine 15 contributes to the ATP binding site. Glutamate 43 is a binding site for K(+). Residues glutamate 56 and glutamine 99 each contribute to the L-methionine site. Residue cysteine 114 is modified to S-nitrosocysteine. ATP-binding positions include 167–169, 235–238, aspartate 246, 252–253, alanine 269, lysine 273, and lysine 277; these read DGK, SGRF, and RK. Residue aspartate 246 coordinates L-methionine. Lysine 277 is a binding site for L-methionine.

It belongs to the AdoMet synthase family. As to quaternary structure, homotetramer. Interacts with GRF3. The cofactor is Mn(2+). Requires Mg(2+) as cofactor. It depends on Co(2+) as a cofactor. K(+) is required as a cofactor. Post-translationally, S-nitrosylated in the presence of NO. The inhibition of SAM1 activity by S-nitrosylation could contribute to the cross-talk between ethylene and NO signaling. As to expression, highly expressed in stems and roots.

It localises to the cytoplasm. It catalyses the reaction L-methionine + ATP + H2O = S-adenosyl-L-methionine + phosphate + diphosphate. It participates in amino-acid biosynthesis; S-adenosyl-L-methionine biosynthesis; S-adenosyl-L-methionine from L-methionine: step 1/1. With respect to regulation, reversibly inhibited by NO. Inhibited by 5,5'-dithiobis-2-nitrobenzoic acid (DTNB) and N-ethylmaleimide (NEM) (in vitro). Catalyzes the formation of S-adenosylmethionine from methionine and ATP. The reaction comprises two steps that are both catalyzed by the same enzyme: formation of S-adenosylmethionine (AdoMet) and triphosphate, and subsequent hydrolysis of the triphosphate. The sequence is that of S-adenosylmethionine synthase 1 (SAM1) from Arabidopsis thaliana (Mouse-ear cress).